Reading from the N-terminus, the 744-residue chain is Collagen alpha-1(VIII) chain (744 aa).

The first 24 residues, 1 to 24, serve as a signal peptide directing secretion; sequence MAVPPRPLQLLGILFIISLNSVRL. The interval 29 to 118 is nonhelical region (NC2); it reads AYYGIKPLPP…KGEVPLASLR (90 aa). The segment covering 101 to 110 has biased composition (basic and acidic residues); sequence KEVVPKKGKG. Disordered regions lie at residues 101 to 395, 412 to 439, and 457 to 590; these read KEVV…EPGL, GPKG…GFPG, and GPIG…DMGL. The interval 119–572 is triple-helical region (COL1); the sequence is GEQGPRGEPG…PGPPGPPGPP (454 aa). Positions 129 to 138 are enriched in pro residues; that stretch reads PRGPPGPPGL. Over residues 169–191 the composition is skewed to low complexity; the sequence is KPGAMGMPGAKGEIGPKGEIGPM. Over residues 204–218 the composition is skewed to gly residues; sequence GLPGIGKPGGPGLPG. Over residues 298 to 307 the composition is skewed to low complexity; the sequence is PQGLIGVPGV. Gly residues-rich tracts occupy residues 329–338 and 412–421; these read GFPGGKGEQG and GPKGEGGVVG. Low complexity-rich tracts occupy residues 470–507 and 548–557; these read LPGL…VGPS and PGALGPQGQP. Positions 559 to 579 are enriched in pro residues; that stretch reads LPGPPGPPGPPGPPAVMPTPS. Positions 573-744 are nonhelical region (NC1); it reads AVMPTPSPQG…SFSGYLLYPM (172 aa). The region spanning 611 to 744 is the C1q domain; that stretch reads PAYEMPAFTA…SFSGYLLYPM (134 aa).

Homotrimers, or heterotrimers in association with alpha 2(VIII) type collagens. Four homotrimers can form a tetrahedron stabilized by central interacting C-terminal NC1 trimers. In terms of processing, prolines at the third position of the tripeptide repeating unit (G-X-Y) are hydroxylated in some or all of the chains. Proteolytically cleaved by neutrophil elastase, in vitro. Proteolytic processing produces the C-terminal NC1 domain fragment, vastatin. In terms of tissue distribution, high levels in calvarium, eye and skin of newborn mice; also in various epithelial, endothelial and mesenchymal cells.

It is found in the secreted. It localises to the extracellular space. The protein localises to the extracellular matrix. The protein resides in the basement membrane. Functionally, macromolecular component of the subendothelium. Major component of the Descemet's membrane (basement membrane) of corneal endothelial cells. Also a component of the endothelia of blood vessels. Necessary for migration and proliferation of vascular smooth muscle cells and thus, has a potential role in the maintenance of vessel wall integrity and structure, in particular in atherogenesis. Its function is as follows. Vastatin, the C-terminal fragment comprising the NC1 domain, inhibits aortic endothelial cell proliferation and causes cell apoptosis. This Mus musculus (Mouse) protein is Collagen alpha-1(VIII) chain (Col8a1).